We begin with the raw amino-acid sequence, 611 residues long: Putative pentatricopeptide repeat-containing protein At1g56570 (611 aa).

PPR repeat units lie at residues 44–74, 75–109, 110–144, 145–176, 177–211, 212–246, 247–281, 282–311, 312–346, 347–377, 379–413, 414–444, and 450–480; these read HHILATNLIVSYFEKGLVEEARSLFDEMPDR, DVVAWTAMITGYASSNYNARAWECFHEMVKQGTSP, NEFTLSSVLKSCRNMKVLAYGALVHGVVVKLGMEG, SLYVDNAMMNMYATCSVTMEAACLIFRDIKVK, NDVTWTTLITGFTHLGDGIGGLKMYKQMLLENAEV, TPYCITIAVRASASIDSVTTGKQIHASVIKRGFQS, NLPVMNSILDLYCRCGYLSEAKHYFHEMEDKDLIT, WNTLISELERSDSSEALLMFQRFESQGFVP, NCYTFTSLVAACANIAALNCGQQLHGRIFRRGFNK, NVELANALIDMYAKCGNIPDSQRVFGEIVDR, NLVSWTSMMIGYGSHGYGAEAVELFDKMVSSGIRP, DRIVFMAVLSACRHAGLVEKGLKYFNVMESE, and DRDIYNCVVDLLGRAGKIGEAYELVERMPFK. The segment at 485-561 is type E motif; sequence TWGAILGACK…EAGMSWILVE (77 aa). The interval 562-592 is type E(+) motif; it reads NQVFSFAVSDKMCPNASSVYSVLGLLIEETR.

It belongs to the PPR family. PCMP-E subfamily.

This Arabidopsis thaliana (Mouse-ear cress) protein is Putative pentatricopeptide repeat-containing protein At1g56570 (PCMP-E64).